The chain runs to 203 residues: Guanylate kinase (203 aa).

The Guanylate kinase-like domain maps to 3 to 181; it reads GTLYIVSAPS…ALDDLKAIFR (179 aa). ATP is bound at residue 10–17; it reads APSGAGKT.

Belongs to the guanylate kinase family.

It is found in the cytoplasm. The enzyme catalyses GMP + ATP = GDP + ADP. Essential for recycling GMP and indirectly, cGMP. The chain is Guanylate kinase (gmk) from Pseudomonas aeruginosa (strain ATCC 15692 / DSM 22644 / CIP 104116 / JCM 14847 / LMG 12228 / 1C / PRS 101 / PAO1).